A 417-amino-acid chain; its full sequence is Neuropeptide FF receptor 2 (417 aa).

The Extracellular segment spans residues 1–45 (MGKRWDSNSSGSWDHIWSGNDTQHPWYSDINITYMNYYLHQPHVT). Asn-8, Asn-20, and Asn-31 each carry an N-linked (GlcNAc...) asparagine glycan. The chain crosses the membrane as a helical span at residues 46-66 (AVFISSYFLIFFLCMVGNTVV). Over 67–82 (CFVVIRNRYMHTVTNF) the chain is Cytoplasmic. Residues 83–103 (FIFNLAISDLLVGIFCMPITL) traverse the membrane as a helical segment. The Extracellular portion of the chain corresponds to 104-119 (LDNIIAGWPFGSSMCK). A disulfide bond links Cys-118 and Cys-206. A helical membrane pass occupies residues 120-140 (ISGLVQGISVAASVFTLVAIA). Residues 141 to 160 (VDRFRCVVYPFKPKLTVKTA) are Cytoplasmic-facing. The helical transmembrane segment at 161–181 (FVMIVIIWGLAITIMTPSAIM) threads the bilayer. The Extracellular portion of the chain corresponds to 182–217 (LHVQEEKYYRVRLSSHNKTSTVYWCREDWPNQEMRR). An N-linked (GlcNAc...) asparagine glycan is attached at Asn-198. A helical membrane pass occupies residues 218–238 (IYTTVLFATIYLAPLSLIVIM). Over 239-274 (YARIGASLFKTSAHSTGKQRLEQWHVSKKKQKVIKM) the chain is Cytoplasmic. A helical membrane pass occupies residues 275–295 (LLTVALLFILSWLPLWTLMML). Residues 296-310 (SDYADLSPNKLRVIN) lie on the Extracellular side of the membrane. A helical membrane pass occupies residues 311–331 (IYVYPFAHWLAFCNSSVNPII). At 332-417 (YGFFNENFRS…TGEATNSTET (86 aa)) the chain is on the cytoplasmic side. The tract at residues 378–417 (HEPASQNPSGENLGCRKSADNPTQESLMEETGEATNSTET) is disordered.

It belongs to the G-protein coupled receptor 1 family.

It localises to the cell membrane. Functionally, receptor for NPAF (A-18-F-amide) and NPFF (F-8-F-amide) neuropeptides, also known as morphine-modulating peptides. Can also be activated by a variety of naturally occurring or synthetic FMRF-amide like ligands. This receptor mediates its action by association with G proteins that activate a phosphatidylinositol-calcium second messenger system. This Rattus norvegicus (Rat) protein is Neuropeptide FF receptor 2 (Npffr2).